A 3351-amino-acid polypeptide reads, in one-letter code: Apolipophorins (3351 aa).

The signal sequence occupies residues 1 to 25 (MARMKYNIALIGILASVLLTIAVNA). The region spanning 43–641 (YIPGNYYDYS…SQHGFLPRSS (599 aa)) is the Vitellogenin domain. Residues Asn-67, Asn-644, Asn-1514, Asn-1744, Asn-1932, Asn-1979, and Asn-2822 are each glycosylated (N-linked (GlcNAc...) asparagine). The VWFD domain maps to 2786 to 2952 (LRGHVVDGKH…DYGVGKCTAI (167 aa)).

Interacts with Nrx-1 (via cytoplasmic domain); the interaction supports apolpp/ApoLI protein stability. Post-translationally, may be modified covalently by lipidation. Cleaved into 2 chains by furin protease. However, prevention of cleavage does not impair its function. During stage 12, it is highly present throughout the yolk sac. By late stage 14, it localizes in the lateral fat body cells. Starting at stage 14, it localizes to the apodemes. Component of hemolymph clots (at protein level). Expressed in the amniosera. Expressed in rhabdomere of photoreceptor cells in retina (at protein level). As to expression, expressed in rhabdomere of photoreceptor cells in retina (at protein level). In terms of tissue distribution, expressed in simper cells as well as interphotoreceptor matrix (at protein level).

The protein resides in the secreted. Its subcellular location is the cell projection. It is found in the rhabdomere. Its function is as follows. Constitutes the major component of lipophorin, which mediates transport for various types of lipids in hemolymph. Acts by forming lipoprotein particles that bind lipoproteins and lipids. Also involved in the transport of hydrophobic ligands like juvenile hormones, pheromone hydrocarbons and carotenoids. Required for morphogens wingless (wg) and hedgehog (hh) function, probably by acting as vehicles for the movement of wg and hh, explaining how covalently lipidated wg and hh can spread over long distances. May also be involved in transport and/or metabolism of heme. Involved in yolk granule formation. May be a component of yolk incorporated into yolk granules via yl/yolkless-mediated endocytosis and the endolysosomal pathway. This Drosophila melanogaster (Fruit fly) protein is Apolipophorins.